The primary structure comprises 463 residues: Glutamate--tRNA ligase 1 (463 aa).

Positions 10–20 (PSPTGYLHIGG) match the 'HIGH' region motif. A 'KMSKS' region motif is present at residues 238–242 (KLSKR). Lys241 serves as a coordination point for ATP.

This sequence belongs to the class-I aminoacyl-tRNA synthetase family. Glutamate--tRNA ligase type 1 subfamily. Monomer.

It is found in the cytoplasm. It catalyses the reaction tRNA(Glu) + L-glutamate + ATP = L-glutamyl-tRNA(Glu) + AMP + diphosphate. Functionally, catalyzes the attachment of glutamate to tRNA(Glu) in a two-step reaction: glutamate is first activated by ATP to form Glu-AMP and then transferred to the acceptor end of tRNA(Glu). This is Glutamate--tRNA ligase 1 from Helicobacter pylori (strain G27).